Consider the following 341-residue polypeptide: Muscleblind-like protein 1 (341 aa).

Thr6 carries the phosphothreonine modification. 4 consecutive C3H1-type zinc fingers follow at residues 13–41 (WLTL…HPSK), 47–73 (NGRV…HPPP), 178–206 (TDRL…HPAD), and 214–240 (DNTV…HPPA).

Belongs to the muscleblind family. As to quaternary structure, interacts with DDX1 and YBX1. Interacts with HNRNPH1; the interaction in RNA-independent. Interacts with RBPMS; the interaction allows cooperative assembly of RNA-bound stable cell-specific alternative splicing regulatory complexes. In terms of tissue distribution, highly expressed in cardiac and skeletal muscle. Weakly expressed in heart and eye (at protein level).

It is found in the nucleus. The protein localises to the cytoplasm. Its subcellular location is the cytoplasmic granule. Its function is as follows. Mediates pre-mRNA alternative splicing regulation. Acts either as activator or repressor of splicing on specific pre-mRNA targets. Inhibits cardiac troponin-T (TNNT2) pre-mRNA exon inclusion but induces insulin receptor (IR) pre-mRNA exon inclusion in muscle. Antagonizes the alternative splicing activity pattern of CELF proteins. Regulates the TNNT2 exon 5 skipping through competition with U2AF2. Inhibits the formation of the spliceosome A complex on intron 4 of TNNT2 pre-mRNA. Binds to the stem-loop structure within the polypyrimidine tract of TNNT2 intron 4 during spliceosome assembly. Binds to the 5'-YGCU(U/G)Y-3'consensus sequence. Binds to the IR RNA. Binds to CUG triplet repeat expansion in myotonic dystrophy muscle cells by sequestering the target RNAs. Together with RNA binding proteins RBPMS and RBFOX2, activates vascular smooth muscle cells alternative splicing events. Regulates NCOR2 alternative splicing. In Mus musculus (Mouse), this protein is Muscleblind-like protein 1 (Mbnl1).